A 471-amino-acid chain; its full sequence is Retinoic acid receptor RXR-beta-A (471 aa).

Residues 1–34 (MGDSRDSRSPDSSSVSSPPSGQRSPPLAPSAAAM) form a disordered region. The modulating stretch occupies residues 1–102 (MGDSRDSRSP…HAVSSSDDVK (102 aa)). Residues 10-25 (PDSSSVSSPPSGQRSP) show a composition bias toward low complexity. Residues 122–197 (KRLCAICGDR…MGMKREVVQD (76 aa)) constitute a DNA-binding region (nuclear receptor). NR C4-type zinc fingers lie at residues 125-145 (CAIC…CEGC) and 161-185 (CRDN…YQKC). Over residues 196-216 (QDERQRSVQEERQRNKERDGE) the composition is skewed to basic and acidic residues. Residues 196–226 (QDERQRSVQEERQRNKERDGEVESSSAANEE) are disordered. The tract at residues 198-221 (ERQRSVQEERQRNKERDGEVESSS) is hinge. One can recognise an NR LBD domain in the interval 224–467 (NEEMPVEKIL…TFLMEMLEAP (244 aa)).

It belongs to the nuclear hormone receptor family. NR2 subfamily. In terms of assembly, homodimer. Heterodimer; with a rar molecule. Binds DNA preferentially as a rar/rxr heterodimer. Heterodimerizes with rarga. Shows uniform expression from the blastula to mid-gastrula stages. At 12 hours post-fertilization (hpf), expressed ubiquitously but more weakly. At 24 hpf, restricted to the ventral diencephalon, pharangeal endoderm and trunk and tail mesoderm; mesoderm expression is in medial cells of each somite along the dorsoventral axis, forming stripes. At 48 hpf, expressed in forebrain, eye, midbrain and anterior hindbrain.

It is found in the nucleus. In terms of biological role, receptor for retinoic acid. Retinoic acid receptors bind as heterodimers to their target response elements in response to their ligands, all-trans or 9-cis retinoic acid, and regulate gene expression in various biological processes. The rar/rxr heterodimers bind to the retinoic acid response elements (RARE) composed of tandem 5'-AGGTCA-3' sites known as DR1-DR5. The high affinity ligand for rxrs is 9-cis retinoic acid. This Danio rerio (Zebrafish) protein is Retinoic acid receptor RXR-beta-A (rxrba).